A 392-amino-acid chain; its full sequence is Methylthioribose-1-phosphate isomerase (392 aa).

Residue D268 is the Proton donor of the active site.

It belongs to the eIF-2B alpha/beta/delta subunits family. MtnA subfamily.

Its subcellular location is the cytoplasm. It localises to the nucleus. The enzyme catalyses 5-(methylsulfanyl)-alpha-D-ribose 1-phosphate = 5-(methylsulfanyl)-D-ribulose 1-phosphate. The protein operates within amino-acid biosynthesis; L-methionine biosynthesis via salvage pathway; L-methionine from S-methyl-5-thio-alpha-D-ribose 1-phosphate: step 1/6. Functionally, catalyzes the interconversion of methylthioribose-1-phosphate (MTR-1-P) into methylthioribulose-1-phosphate (MTRu-1-P). The protein is Methylthioribose-1-phosphate isomerase of Ajellomyces capsulatus (strain G186AR / H82 / ATCC MYA-2454 / RMSCC 2432) (Darling's disease fungus).